A 199-amino-acid chain; its full sequence is ATP-dependent Clp protease proteolytic subunit (199 aa).

Catalysis depends on serine 98, which acts as the Nucleophile. Histidine 123 is an active-site residue.

It belongs to the peptidase S14 family. As to quaternary structure, fourteen ClpP subunits assemble into 2 heptameric rings which stack back to back to give a disk-like structure with a central cavity, resembling the structure of eukaryotic proteasomes.

Its subcellular location is the cytoplasm. It carries out the reaction Hydrolysis of proteins to small peptides in the presence of ATP and magnesium. alpha-casein is the usual test substrate. In the absence of ATP, only oligopeptides shorter than five residues are hydrolyzed (such as succinyl-Leu-Tyr-|-NHMec, and Leu-Tyr-Leu-|-Tyr-Trp, in which cleavage of the -Tyr-|-Leu- and -Tyr-|-Trp bonds also occurs).. In terms of biological role, cleaves peptides in various proteins in a process that requires ATP hydrolysis. Has a chymotrypsin-like activity. Plays a major role in the degradation of misfolded proteins. The polypeptide is ATP-dependent Clp protease proteolytic subunit (Clostridium botulinum (strain Eklund 17B / Type B)).